The chain runs to 270 residues: Gap junction beta-3 protein (270 aa).

Residues 1 to 20 (MDWKKLQDLLSGVNQYSTAF) lie on the Cytoplasmic side of the membrane. The helical transmembrane segment at 21-40 (GRIWLSVVFVFRVLVYVVAA) threads the bilayer. Residues 41–75 (ERVWGDEQKDFDCNTRQPGCTNVCYDNFFPISNIR) lie on the Extracellular side of the membrane. The chain crosses the membrane as a helical span at residues 76 to 98 (LWALQLIFVTCPSMLVILHVAYR). Residues 99–126 (EERERKHRQKHGEQCAKLYSHPGKKHGG) are Cytoplasmic-facing. The chain crosses the membrane as a helical span at residues 127–149 (LWWTYLFSLIFKLIIELVFLYVL). The Extracellular segment spans residues 150–188 (HTLWHGFTMPRLVQCASIVPCPNTVDCYIARPTEKKVFT). Residues 189–211 (YFMVGASAVCIILTICEICYLIF) traverse the membrane as a helical segment. Topologically, residues 212–270 (HRIMRGISKGKSTKSISSPKSSSRASTCRCHHKLLESGDPEADPASEKLQASAPSLTPI) are cytoplasmic. Positions 246-270 (LESGDPEADPASEKLQASAPSLTPI) are disordered.

The protein belongs to the connexin family. Beta-type (group I) subfamily. As to quaternary structure, a connexon is composed of a hexamer of connexins. Interacts with CNST.

It is found in the cell membrane. The protein localises to the cell junction. Its subcellular location is the gap junction. One gap junction consists of a cluster of closely packed pairs of transmembrane channels, the connexons, through which materials of low MW diffuse from one cell to a neighboring cell. The sequence is that of Gap junction beta-3 protein (Gjb3) from Mus musculus (Mouse).